The sequence spans 348 residues: Uroporphyrinogen decarboxylase (348 aa).

Substrate contacts are provided by residues 27–31, Phe-46, Asp-76, Tyr-152, Ser-207, and His-320; that span reads RQAGR.

The protein belongs to the uroporphyrinogen decarboxylase family. Homodimer.

It localises to the cytoplasm. It carries out the reaction uroporphyrinogen III + 4 H(+) = coproporphyrinogen III + 4 CO2. The protein operates within porphyrin-containing compound metabolism; protoporphyrin-IX biosynthesis; coproporphyrinogen-III from 5-aminolevulinate: step 4/4. Functionally, catalyzes the decarboxylation of four acetate groups of uroporphyrinogen-III to yield coproporphyrinogen-III. The polypeptide is Uroporphyrinogen decarboxylase (Bacillus anthracis).